The following is a 214-amino-acid chain: Germin-like protein (214 aa).

A signal peptide spans Met1–Ala22. Cys28 and Cys44 form a disulfide bridge. Positions Ser58–Lys204 constitute a Cupin type-1 domain. His106, His108, and Glu113 together coordinate Mn(2+).

The protein belongs to the germin family. In terms of assembly, oligomer (believed to be a pentamer but probably hexamer). As to expression, cotyledons and leaves.

The protein localises to the secreted. It localises to the extracellular space. Its subcellular location is the apoplast. This chain is Germin-like protein (GLP), found in Ipomoea nil (Japanese morning glory).